A 364-amino-acid chain; its full sequence is D-alanine--D-alanine ligase (364 aa).

Positions 146 to 352 (KLCAADAGVE…FDELISRLLL (207 aa)) constitute an ATP-grasp domain. 179-234 (TERFAFPVFVKPANLGSSVGISKVHNAAELRPALDKACALDAKVLVEETITGREVE) provides a ligand contact to ATP. The Mg(2+) site is built by Asp305, Glu319, and Asn321.

The protein belongs to the D-alanine--D-alanine ligase family. The cofactor is Mg(2+). Requires Mn(2+) as cofactor.

It is found in the cytoplasm. The enzyme catalyses 2 D-alanine + ATP = D-alanyl-D-alanine + ADP + phosphate + H(+). The protein operates within cell wall biogenesis; peptidoglycan biosynthesis. Functionally, cell wall formation. This chain is D-alanine--D-alanine ligase, found in Chlorobaculum parvum (strain DSM 263 / NCIMB 8327) (Chlorobium vibrioforme subsp. thiosulfatophilum).